The following is a 207-amino-acid chain: ATP-dependent Clp protease proteolytic subunit 1 (207 aa).

Ser103 functions as the Nucleophile in the catalytic mechanism. The active site involves His128.

Belongs to the peptidase S14 family. In terms of assembly, fourteen ClpP subunits assemble into 2 heptameric rings which stack back to back to give a disk-like structure with a central cavity, resembling the structure of eukaryotic proteasomes.

It is found in the cytoplasm. It catalyses the reaction Hydrolysis of proteins to small peptides in the presence of ATP and magnesium. alpha-casein is the usual test substrate. In the absence of ATP, only oligopeptides shorter than five residues are hydrolyzed (such as succinyl-Leu-Tyr-|-NHMec, and Leu-Tyr-Leu-|-Tyr-Trp, in which cleavage of the -Tyr-|-Leu- and -Tyr-|-Trp bonds also occurs).. Functionally, cleaves peptides in various proteins in a process that requires ATP hydrolysis. Has a chymotrypsin-like activity. Plays a major role in the degradation of misfolded proteins. This chain is ATP-dependent Clp protease proteolytic subunit 1, found in Synechococcus sp. (strain CC9605).